The following is a 370-amino-acid chain: Pyruvate dehydrogenase E1 component subunit alpha (370 aa).

Heterodimer of an alpha and a beta chain. It depends on thiamine diphosphate as a cofactor.

The enzyme catalyses N(6)-[(R)-lipoyl]-L-lysyl-[protein] + pyruvate + H(+) = N(6)-[(R)-S(8)-acetyldihydrolipoyl]-L-lysyl-[protein] + CO2. Its function is as follows. The pyruvate dehydrogenase complex catalyzes the overall conversion of pyruvate to acetyl-CoA and CO(2). It contains multiple copies of three enzymatic components: pyruvate dehydrogenase (E1), dihydrolipoamide acetyltransferase (E2) and lipoamide dehydrogenase (E3). This is Pyruvate dehydrogenase E1 component subunit alpha (pdhA) from Staphylococcus epidermidis (strain ATCC 35984 / DSM 28319 / BCRC 17069 / CCUG 31568 / BM 3577 / RP62A).